The chain runs to 671 residues: MEPIEQQLTELRTTLRHHEYLYHVMDAPEIPDAEYDRLMRELRELEAQRPDLITPDSPTQRVGAAPLTAFNQIRHEVPMLSLDNVFDEESFLAFNKRVQDRLKSTENVIWCCELKLDGLAVSILYENGVLVSAATRGDGTTGEDITSNVRTIRAIPLKLHGDNIPARLEVRGEVFLPQAGFEKINEDARRTGGKVFANPRNAAAGSLRQLDPRITAKRPLTFFCYGVGILEGGELPDTHLGRLLQFKAWGLPVSDRVTLCDSPQAVLDFYRNVEKDRPTLGFDIDGVVIKVNSLALQEQLGFVARAPRWAVAFKFPAQEQMTFVRDVEFQVGRTGAITPVARLEPVQVAGVLVSNATLHNADEIEQLGLRIGDKVVIRRAGDVIPQVVNVVLSERPEETRPIVFPTHCPVCGSDVERVEGEAVTRCTGGLICGAQRKESLKHFVSRRAMDVDGMGDKIIDQLVEREYVHTPADLFRLTAGKLTGLDRMGPKSAQNVVNALEKAKATTFARFLYALGIREVGEATAAGLAAYFGTLEALQTATIDELQKVPDVGIVVATHVFNFFAEESNRDVIGQLLAEGVHWPAPVVINVQEIDSPFAGKTVVLTGSLSQMSRDDAKARLAALGAKVAGSVSKKTDLVIAGEAAGSKLAKAQELGITVIDEAEMIRLLGA.

NAD(+) is bound by residues 32–36 (DAEYD), 81–82 (SL), and Glu113. Lys115 (N6-AMP-lysine intermediate) is an active-site residue. Residues Arg136, Glu173, Lys290, and Lys314 each coordinate NAD(+). The Zn(2+) site is built by Cys408, Cys411, Cys426, and Cys432. Residues 593 to 671 (EIDSPFAGKT…EAEMIRLLGA (79 aa)) form the BRCT domain.

It belongs to the NAD-dependent DNA ligase family. LigA subfamily. The cofactor is Mg(2+). Mn(2+) serves as cofactor.

The enzyme catalyses NAD(+) + (deoxyribonucleotide)n-3'-hydroxyl + 5'-phospho-(deoxyribonucleotide)m = (deoxyribonucleotide)n+m + AMP + beta-nicotinamide D-nucleotide.. DNA ligase that catalyzes the formation of phosphodiester linkages between 5'-phosphoryl and 3'-hydroxyl groups in double-stranded DNA using NAD as a coenzyme and as the energy source for the reaction. It is essential for DNA replication and repair of damaged DNA. This Salmonella gallinarum (strain 287/91 / NCTC 13346) protein is DNA ligase.